The primary structure comprises 356 residues: S-adenosylmethionine:tRNA ribosyltransferase-isomerase (356 aa).

The protein belongs to the QueA family. As to quaternary structure, monomer.

It is found in the cytoplasm. It catalyses the reaction 7-aminomethyl-7-carbaguanosine(34) in tRNA + S-adenosyl-L-methionine = epoxyqueuosine(34) in tRNA + adenine + L-methionine + 2 H(+). It functions in the pathway tRNA modification; tRNA-queuosine biosynthesis. In terms of biological role, transfers and isomerizes the ribose moiety from AdoMet to the 7-aminomethyl group of 7-deazaguanine (preQ1-tRNA) to give epoxyqueuosine (oQ-tRNA). This Escherichia coli O127:H6 (strain E2348/69 / EPEC) protein is S-adenosylmethionine:tRNA ribosyltransferase-isomerase.